Here is a 295-residue protein sequence, read N- to C-terminus: MTARIIDGKIISADLRGRVAAEVTRIKAEHGITPGLAVVLVGSDPASEVYVRSKHKQTQEAGMASFEHRLPADVAQADLLALIGQLNADPAVHGILVQLPLPKGLDSNAVIDAIDPAKDVDGLNPVNAGRLASGLFALTPCTPLGCIIMAKQVHASLEGMNAIVIGRSNLVGKPLVQLLLNENATVTIAHSRSRDLPALCRQADLVFAAVGKAEMVKGDWIKPGATVIDVGINRTPSPDGGKDKLVGDVAFHEAKDVAGAITPVPGGVGLMTVACLLVNTVRAASAIHGLPKPGV.

Residues 166 to 168 (GRS), Ser191, and Ile232 each bind NADP(+).

The protein belongs to the tetrahydrofolate dehydrogenase/cyclohydrolase family. In terms of assembly, homodimer.

The catalysed reaction is (6R)-5,10-methylene-5,6,7,8-tetrahydrofolate + NADP(+) = (6R)-5,10-methenyltetrahydrofolate + NADPH. It catalyses the reaction (6R)-5,10-methenyltetrahydrofolate + H2O = (6R)-10-formyltetrahydrofolate + H(+). Its pathway is one-carbon metabolism; tetrahydrofolate interconversion. Functionally, catalyzes the oxidation of 5,10-methylenetetrahydrofolate to 5,10-methenyltetrahydrofolate and then the hydrolysis of 5,10-methenyltetrahydrofolate to 10-formyltetrahydrofolate. This chain is Bifunctional protein FolD, found in Rhodopseudomonas palustris (strain BisB5).